Reading from the N-terminus, the 463-residue chain is Vacuolar cation/proton exchanger 1 (463 aa).

Residue Ala-2 is modified to N-acetylalanine. Over 2-68 (AGIVTEPWSV…LKDFLSNLQE (67 aa)) the chain is Cytoplasmic. Residues 25 to 33 (SRELRLGRT) are required for autoinhibitory regulation. The tract at residues 56 to 62 (YKGLKDF) is required for interaction with autoinhibitory region. Residues 69 to 89 (VILGTKLAILFPAIPAAIICT) traverse the membrane as a helical segment. Positions 87–95 (ICTYCGVSQ) are required for Ca(2+)/H(+) exchange activity. Residues 90–96 (YCGVSQP) are Extracellular-facing. A helical transmembrane segment spans residues 97-116 (WIFGLSLLGLTPLAERVSFL). The Cytoplasmic portion of the chain corresponds to 117 to 127 (TEQLAFYTGPT). Residues 128–148 (LGGLLNATCGNATELIIAILA) traverse the membrane as a helical segment. Residues 137-172 (GNATELIIAILALTNNKVAVVKYSLLGSILSNLLLV) form a cation selection region. Topologically, residues 149 to 161 (LTNNKVAVVKYSL) are extracellular. A helical membrane pass occupies residues 162–182 (LGSILSNLLLVLGTSLFCGGI). At 183–197 (ANIRREQRFDRKQAD) the chain is on the cytoplasmic side. The chain crosses the membrane as a helical span at residues 198-218 (VNFFLLLLGFLCHLLPLLVGY). Residues 219 to 238 (LKNGEASAAVLSDMQLSISR) lie on the Extracellular side of the membrane. Residues 239–259 (GFSIVMLISYIAYLVFQLWTH) traverse the membrane as a helical segment. Over 260–281 (RQLFDAQEQEDEYDDDVEQETA) the chain is Cytoplasmic. Residues 282–302 (VISFWSGFAWLVGMTLVIALL) form a helical membrane-spanning segment. Residues 303–325 (SEYVVATIEEASDKWNLSVSFIS) lie on the Extracellular side of the membrane. N-linked (GlcNAc...) asparagine glycosylation is present at Asn-318. The helical transmembrane segment at 326–346 (IILLPIVGNAAEHAGAVIFAF) threads the bilayer. The interval 333–368 (GNAAEHAGAVIFAFKNKLDISLGVALGSATQIGLFV) is cation selection. Over 347-360 (KNKLDISLGVALGS) the chain is Cytoplasmic. Residues 361–381 (ATQIGLFVVPLTIIVAWILGI) form a helical membrane-spanning segment. Topologically, residues 382 to 384 (NMD) are extracellular. Residues 385-405 (LNFGPLETGCLAVSIIITAFT) traverse the membrane as a helical segment. The Cytoplasmic portion of the chain corresponds to 406–411 (LQDGSS). The helical transmembrane segment at 412-432 (HYMKGLVLLLCYFIIAICFFV) threads the bilayer. The Extracellular segment spans residues 433–463 (DKLPQKQNAIHLGHQAMNNVVTATGGGVFSS).

The protein belongs to the Ca(2+):cation antiporter (CaCA) (TC 2.A.19) family. Cation/proton exchanger (CAX) subfamily. As to quaternary structure, interacts with GRXS14 and CXIP4. In terms of tissue distribution, expressed at low levels in leaves, stems and flowers.

It is found in the vacuole membrane. Activated by monothiol glutaredoxin GRXS14 and CXIP4. Inhibited by excess of Ca(2+) and Cd(2+), Na(+) and K(+), but not Mn(2+). Functionally, vacuolar cation/proton exchanger (CAX). Translocates Ca(2+) and other metal ions into vacuoles using the proton gradient formed by H(+)-ATPase and H(+)-pyrophosphatase. Involved in ion homeostasis in association with CAX3. May play a role in cold-acclimation response. This chain is Vacuolar cation/proton exchanger 1 (CAX1), found in Arabidopsis thaliana (Mouse-ear cress).